We begin with the raw amino-acid sequence, 229 residues long: Secretory carrier-associated membrane protein 4 (229 aa).

Residues 1 to 39 (MSEKENNFPPLPKFIPVKPCFYQNFSDEIPVEHQVLVKR) lie on the Cytoplasmic side of the membrane. 4 helical membrane-spanning segments follow: residues 40–60 (IYRL…ACLA), 61–81 (WWIG…LLLF), 105–125 (FMAF…QAIG), and 149–169 (VVML…AIAI). The Cytoplasmic portion of the chain corresponds to 170 to 229 (MKVHRIYRGAGGSFQKAQTEWNTGTWRNPPSREAQYNNFSGNSLPEYPTVPSYPGSGQWP). At threonine 194 the chain carries Phosphothreonine. The disordered stretch occupies residues 208–229 (FSGNSLPEYPTVPSYPGSGQWP).

Belongs to the SCAMP family.

Its subcellular location is the membrane. Its function is as follows. Probably involved in membrane protein trafficking. The chain is Secretory carrier-associated membrane protein 4 (SCAMP4) from Homo sapiens (Human).